A 251-amino-acid polypeptide reads, in one-letter code: Triosephosphate isomerase (251 aa).

9 to 11 is a binding site for substrate; sequence NWK. Catalysis depends on His-94, which acts as the Electrophile. Residue Glu-167 is the Proton acceptor of the active site. Substrate is bound by residues Gly-173, Ser-213, and 234–235; that span reads GG.

It belongs to the triosephosphate isomerase family. As to quaternary structure, homodimer.

Its subcellular location is the cytoplasm. It catalyses the reaction D-glyceraldehyde 3-phosphate = dihydroxyacetone phosphate. Its pathway is carbohydrate biosynthesis; gluconeogenesis. It participates in carbohydrate degradation; glycolysis; D-glyceraldehyde 3-phosphate from glycerone phosphate: step 1/1. Functionally, involved in the gluconeogenesis. Catalyzes stereospecifically the conversion of dihydroxyacetone phosphate (DHAP) to D-glyceraldehyde-3-phosphate (G3P). The protein is Triosephosphate isomerase of Finegoldia magna (strain ATCC 29328 / DSM 20472 / WAL 2508) (Peptostreptococcus magnus).